The primary structure comprises 93 residues: Sm-like protein LSM2 (93 aa).

The Sm domain maps to 2 to 76 (LFFSYFKDLV…VRYVQLPKDG (75 aa)).

It belongs to the snRNP Sm proteins family. Component of the heptameric LSM1-LSM7 complex that forms a seven-membered ring structure with a donut shape. The LSM subunits are arranged in the order LSM1, LSM2, LSM3, LSM6, LSM5, LSM7 and LSM4. LSM2 subunit interacts only with its two neighboring subunits, LSM1A or LSM1B and LSM3A or LSM3B. Component of the heptameric LSM2-LSM8 complex that forms a seven-membered ring structure with a donut shape. The LSM subunits are arranged in the order LSM8, LSM2, LSM3, LSM6, LSM5, LSM7 and LSM4. LSM2 subunit interacts only with its two neighboring subunits, LSM8 and LSM3A or LSM3B. In terms of tissue distribution, expressed in roots, leaves, stems, flowers and siliques.

Its subcellular location is the cytoplasm. It is found in the nucleus. In terms of biological role, component of LSM protein complexes, which are involved in RNA processing. Component of the cytoplasmic LSM1-LSM7 complex which is involved in mRNA degradation by promoting decapping and leading to accurate 5'-3' mRNA decay. The cytoplasmic LSM1-LSM7 complex regulates developmental gene expression by the decapping of specific development-related transcripts. Component of the nuclear LSM2-LSM8 complex which is involved splicing nuclear mRNAs. LSM2-LSM8 binds directly to the U6 small nuclear RNAs (snRNAs) and is essential for accurate splicing of selected development-related mRNAs through the stabilization of the spliceosomal U6 snRNA. Plays a critical role in the regulation of development-related gene expression. This Arabidopsis thaliana (Mouse-ear cress) protein is Sm-like protein LSM2.